Consider the following 283-residue polypeptide: Pantoate--beta-alanine ligase (283 aa).

This sequence belongs to the pantothenate synthetase family.

It catalyses the reaction (R)-pantoate + beta-alanine + ATP = (R)-pantothenate + AMP + diphosphate + H(+). The protein operates within cofactor biosynthesis; (R)-pantothenate biosynthesis; (R)-pantothenate from (R)-pantoate and beta-alanine: step 1/1. The chain is Pantoate--beta-alanine ligase (pan6) from Schizosaccharomyces pombe (strain 972 / ATCC 24843) (Fission yeast).